A 399-amino-acid chain; its full sequence is MSMSKLDSLFTAALEQAAQRQVRRRLRRATAAPPGRLALDGRTLVNFSSNDYLGLARHPLLAERASLWATRHGAGAQASRLVCGNLDLHEQVEAKLARLKGTEAALLLASGWQANAAVLPALFKAAAAQGEPQVYTDRLNHASLHHGCQAAGVRQIRFRHNDLAHLEHLLAERAGAPGARFIVTESVFSMDGDRADVPALAALAARHHAFLYLDEAHATGVLGPRGMGLAGLAPGGVDLAMGTFSKGLGSFGAYVAGSRALCDYLVNACSGFIYTTALPPAVLGAIDAALDLVPRLDQARAALLGHGERLRASLAAQGIDCGASSTQIVPAIVGDAGHALALAAELERRGLLAVAIRPPTVPAGTSRLRIALSAAHGEAELDQLIEALAAGWRAVRQAA.

Substrate is bound at residue Arg24. Pyridoxal 5'-phosphate is bound at residue 111-112 (GW). His141 is a substrate binding site. Residues Ser189, 214 to 217 (DEAH), and 243 to 246 (TFSK) contribute to the pyridoxal 5'-phosphate site. The residue at position 246 (Lys246) is an N6-(pyridoxal phosphate)lysine. Residue Thr360 participates in substrate binding.

Belongs to the class-II pyridoxal-phosphate-dependent aminotransferase family. BioF subfamily. As to quaternary structure, homodimer. Requires pyridoxal 5'-phosphate as cofactor.

It catalyses the reaction 6-carboxyhexanoyl-[ACP] + L-alanine + H(+) = (8S)-8-amino-7-oxononanoate + holo-[ACP] + CO2. It functions in the pathway cofactor biosynthesis; biotin biosynthesis. Its function is as follows. Catalyzes the decarboxylative condensation of pimeloyl-[acyl-carrier protein] and L-alanine to produce 8-amino-7-oxononanoate (AON), [acyl-carrier protein], and carbon dioxide. This Bordetella bronchiseptica (strain ATCC BAA-588 / NCTC 13252 / RB50) (Alcaligenes bronchisepticus) protein is Putative 8-amino-7-oxononanoate synthase (bioF).